Here is a 594-residue protein sequence, read N- to C-terminus: Aspartate--tRNA(Asp/Asn) ligase (594 aa).

Glu173 provides a ligand contact to L-aspartate. The tract at residues 197 to 200 is aspartate; sequence QLFK. Arg219 provides a ligand contact to L-aspartate. ATP-binding positions include 219–221 and Gln228; that span reads RDE. Residue His451 coordinates L-aspartate. ATP is bound at residue Glu485. Arg492 is an L-aspartate binding site. 537–540 contacts ATP; that stretch reads GWDR. Residues 566 to 594 are disordered; it reads PLTDAPAPITAQQRKESGIDAQPKRVQQA.

It belongs to the class-II aminoacyl-tRNA synthetase family. Type 1 subfamily. In terms of assembly, homodimer.

The protein resides in the cytoplasm. It carries out the reaction tRNA(Asx) + L-aspartate + ATP = L-aspartyl-tRNA(Asx) + AMP + diphosphate. Aspartyl-tRNA synthetase with relaxed tRNA specificity since it is able to aspartylate not only its cognate tRNA(Asp) but also tRNA(Asn). Reaction proceeds in two steps: L-aspartate is first activated by ATP to form Asp-AMP and then transferred to the acceptor end of tRNA(Asp/Asn). This chain is Aspartate--tRNA(Asp/Asn) ligase, found in Mycobacterium tuberculosis (strain CDC 1551 / Oshkosh).